The following is a 101-amino-acid chain: Pollen allergen Amb a 3 (101 aa).

Residues 2–101 (KVYLVGGPEL…QKFVACVPGR (100 aa)) form the Phytocyanin domain. The N-linked (GlcNAc...) asparagine glycan is linked to Asn41. An intrachain disulfide couples Cys61 to Cys88. Ser84 carries O-linked (Hex) serine glycosylation. The residue at position 97 (Cys97) is a Cysteine derivative. Arg101 carries the post-translational modification Blocked carboxyl end (Arg).

In terms of processing, the identity of the saccharide is not reported. The sugar attached to Ser-84 is represented simply as Hex. Cys-97 sulfhydryl group is modified but does not form an interchain disulfide bond.

The polypeptide is Pollen allergen Amb a 3 (Ambrosia artemisiifolia var. elatior (Short ragweed)).